The sequence spans 510 residues: Allene oxide synthase 2, chloroplastic (510 aa).

The transit peptide at methionine 1–serine 31 directs the protein to the chloroplast. Heme b is bound by residues lysine 127, histidine 158, and lysine 162. (13S)-hydroperoxy-(9Z,11E)-octadecadienoate-binding residues include asparagine 315 and lysine 321. Residue asparagine 315 participates in (13S)-hydroperoxy-(9Z,11E,15Z)-octadecatrienoate binding. Positions 463 and 465 each coordinate heme b.

Belongs to the cytochrome P450 family. Requires heme b as cofactor. As to expression, expressed in flower buds, leaves, roots, stems, petioles and cotyledons. Not detected in ripe fruits. Expressed in sieve elements.

The protein localises to the plastid. The protein resides in the chloroplast inner membrane. The enzyme catalyses (13S)-hydroperoxy-(9Z,11E,15Z)-octadecatrienoate = (9Z,13S,15Z)-12,13-epoxyoctadeca-9,11,15-trienoate + H2O. It carries out the reaction (13S)-hydroperoxy-(9Z,11E)-octadecadienoate = (9Z,13S)-12,13-epoxyoctadeca-9,11-dienoate + H2O. Functionally, cytochrome P450 of the CYP74A subfamily involved in the biosynthesis of jasmonic acid from lipoxygenase-derived hydroperoxides of free fatty acids. Catalyzes the synthesis of unstable allene oxide, which is further converted spontaneously by hydrolysis or cyclization. Metabolizes 13- but not 9-hydroperoxides of linoleic and linolenic acids. Can use 15S-hydroperoxy-11(Z),13(E),17(Z)-eicosatrienoic acid (15-HPET) and 13S-hydroperoxy-9(Z),11(E),15(Z)-octadecatrienoic acid (13-HPOT) as substrates, but only 50% activity with 13S-hydroperoxy-9(Z),11(E)-octadecadienoic acid (13-HPOD). The polypeptide is Allene oxide synthase 2, chloroplastic (Solanum lycopersicum (Tomato)).